The primary structure comprises 425 residues: Glucose-1-phosphate adenylyltransferase (425 aa).

Alpha-D-glucose 1-phosphate-binding positions include Y114, G179, 194–195, and S212; that span reads EK.

Belongs to the bacterial/plant glucose-1-phosphate adenylyltransferase family. As to quaternary structure, homotetramer.

It catalyses the reaction alpha-D-glucose 1-phosphate + ATP + H(+) = ADP-alpha-D-glucose + diphosphate. It functions in the pathway glycan biosynthesis; glycogen biosynthesis. Its function is as follows. Involved in the biosynthesis of ADP-glucose, a building block required for the elongation reactions to produce glycogen. Catalyzes the reaction between ATP and alpha-D-glucose 1-phosphate (G1P) to produce pyrophosphate and ADP-Glc. This is Glucose-1-phosphate adenylyltransferase from Pectobacterium carotovorum subsp. carotovorum (strain PC1).